An 804-amino-acid chain; its full sequence is RasGAP-activating-like protein 1 (804 aa).

2 consecutive C2 domains span residues 1–105 and 116–231; these read MAKS…DSWI and VQGE…KGWF. The Ca(2+) site is built by D21, D27, D74, D76, D82, D149, D155, D202, D204, and D210. Residues 317–545 form the Ras-GAP domain; that stretch reads GLAGRFLDYL…SRVRDFLDRL (229 aa). In terms of domain architecture, PH spans 565–672; it reads AIVREGYLLK…WLSALRKASA (108 aa). A Btk-type zinc finger spans residues 674 to 710; it reads NPNKLAACHPGAFRSARWTCCLQAERSAAGCSRTHSA. The Zn(2+) site is built by H682, C693, C694, and C704.

Requires Ca(2+) as cofactor. Highly expressed in thyroid and adrenal medulla, lower expression in brain, spinal cord and trachea. Expressed in melanocytes.

In terms of biological role, probable inhibitory regulator of the Ras-cyclic AMP pathway. Plays a role in dendrite formation by melanocytes. The protein is RasGAP-activating-like protein 1 of Homo sapiens (Human).